A 728-amino-acid polypeptide reads, in one-letter code: Probable 3',5'-cyclic phosphodiesterase pde-5 (728 aa).

The 158-residue stretch at 214–371 (SMDAVIIKVM…HHAKLYDKIR (158 aa)) folds into the GAF domain. In terms of domain architecture, PDEase spans 390 to 709 (CNADEVNKLK…KKWEELAEEQ (320 aa)). H465 (proton donor) is an active-site residue. A divalent metal cation contacts are provided by H469, H503, D504, and D614. Residues 691-728 (MRERCEYNAKKWEELAEEQRKKQEALAQQNGEANETQE) adopt a coiled-coil conformation. The disordered stretch occupies residues 708 to 728 (EQRKKQEALAQQNGEANETQE). A compositionally biased stretch (polar residues) spans 716–728 (LAQQNGEANETQE).

This sequence belongs to the cyclic nucleotide phosphodiesterase family. Requires a divalent metal cation as cofactor.

The catalysed reaction is a nucleoside 3',5'-cyclic phosphate + H2O = a nucleoside 5'-phosphate + H(+). In terms of biological role, redundantly with pde-1, plays a role in the AFD thermosensory neurons to regulate microvilli receptive ending morphology, possibly by regulating cGMP levels. The sequence is that of Probable 3',5'-cyclic phosphodiesterase pde-5 (pde-5) from Caenorhabditis elegans.